The sequence spans 756 residues: 1,4-alpha-glucan branching enzyme GlgB (756 aa).

The Nucleophile role is filled by aspartate 425. Glutamate 478 (proton donor) is an active-site residue.

It belongs to the glycosyl hydrolase 13 family. GlgB subfamily. In terms of assembly, monomer.

The enzyme catalyses Transfers a segment of a (1-&gt;4)-alpha-D-glucan chain to a primary hydroxy group in a similar glucan chain.. It functions in the pathway glycan biosynthesis; glycogen biosynthesis. Its function is as follows. Catalyzes the formation of the alpha-1,6-glucosidic linkages in glycogen by scission of a 1,4-alpha-linked oligosaccharide from growing alpha-1,4-glucan chains and the subsequent attachment of the oligosaccharide to the alpha-1,6 position. The polypeptide is 1,4-alpha-glucan branching enzyme GlgB (Cupriavidus necator (strain ATCC 17699 / DSM 428 / KCTC 22496 / NCIMB 10442 / H16 / Stanier 337) (Ralstonia eutropha)).